A 1876-amino-acid polypeptide reads, in one-letter code: Mediator of RNA polymerase II transcription subunit 12 (1876 aa).

The segment covering 1–10 has biased composition (low complexity); the sequence is MLRSGAASAS. 5 disordered regions span residues 1–75, 291–314, 715–737, 1373–1405, and 1801–1876; these read MLRS…DMSQ, TATASPAPVSPSTHLPRTPSAAPS, PSASSATEQHQNPDGSVQTPSSV, STDADKTPRRMDNSHKGMTNFGPDDGADAPAQA, and LPCR…SKRD. Residues 1373–1387 are compositionally biased toward basic and acidic residues; that stretch reads STDADKTPRRMDNSH. Over residues 1394 to 1405 the composition is skewed to low complexity; it reads GPDDGADAPAQA. Over residues 1867–1876 the composition is skewed to basic residues; that stretch reads SRKRRLSKRD.

The protein belongs to the Mediator complex subunit 12 family. In terms of assembly, component of the SRB8-11 complex, which itself associates with the Mediator complex.

It localises to the nucleus. In terms of biological role, component of the SRB8-11 complex. The SRB8-11 complex is a regulatory module of the Mediator complex which is itself involved in regulation of basal and activated RNA polymerase II-dependent transcription. The SRB8-11 complex may be involved in the transcriptional repression of a subset of genes regulated by Mediator. It may inhibit the association of the Mediator complex with RNA polymerase II to form the holoenzyme complex. The chain is Mediator of RNA polymerase II transcription subunit 12 (SRB8) from Mycosarcoma maydis (Corn smut fungus).